The following is a 500-amino-acid chain: L-arabinose isomerase (500 aa).

Glutamate 306, glutamate 333, histidine 350, and histidine 450 together coordinate Mn(2+).

This sequence belongs to the arabinose isomerase family. As to quaternary structure, homohexamer. Requires Mn(2+) as cofactor.

The enzyme catalyses beta-L-arabinopyranose = L-ribulose. It participates in carbohydrate degradation; L-arabinose degradation via L-ribulose; D-xylulose 5-phosphate from L-arabinose (bacterial route): step 1/3. Functionally, catalyzes the conversion of L-arabinose to L-ribulose. This chain is L-arabinose isomerase, found in Klebsiella pneumoniae (strain 342).